The primary structure comprises 661 residues: CD180 antigen (661 aa).

An N-terminal signal peptide occupies residues 1–20 (MAPDISCFFLVALFLASCRA). At 21 to 626 (TTSSDQKCIE…RLSDVTLSCS (606 aa)) the chain is on the extracellular side. An LRRNT domain is found at 33 to 53 (VNKTYNCENLGLNEIPGTLPN). Residues asparagine 34, asparagine 53, asparagine 70, and asparagine 78 are each glycosylated (N-linked (GlcNAc...) asparagine). LRR repeat units follow at residues 54–75 (STEC…TFSR), 78–99 (NLTF…TFQS), 102–123 (RLDT…ALSG), 126–147 (ALKH…PLHN), 150–171 (TLES…KGFP), 174–195 (KLKV…DMSS), and 201–221 (NLSL…AFDS). 3 N-linked (GlcNAc...) asparagine glycosylation sites follow: asparagine 201, asparagine 244, and asparagine 288. LRR repeat units follow at residues 275–296 (SVES…TFHC), 299–321 (GLQE…VGLS), 322–343 (TLKK…SASN), 346–366 (SLTH…TGCL), and 371–391 (NLRE…CNLQ). 2 N-linked (GlcNAc...) asparagine glycosylation sites follow: asparagine 394 and asparagine 402. LRR repeat units lie at residues 397-418 (HLQS…AFKE), 421-442 (QLEL…SPFQ), 446-466 (LLKV…QLFD), 470-493 (ALQH…NSLQ), 497-518 (RLEI…AFTS), 521-544 (MMNH…SHLK), and 546-566 (IYLN…LPIL). Asparagine 451 is a glycosylation site (N-linked (GlcNAc...) asparagine). Residues 577 to 627 (NPLDCTCSNIYFLEWYKENMQKLEDTEDTLCENPPLLRGVRLSDVTLSCSM) form the LRRCT domain. A helical transmembrane segment spans residues 627–650 (MAAVGIFFLIVFLLVFAILLIFAV). Topologically, residues 651–661 (KYFLRWKYQHI) are cytoplasmic.

The protein belongs to the Toll-like receptor family. As to quaternary structure, M-shaped tetramer of two CD180-LY86 heterodimers. As to expression, B-lymphocytes and spleen. Not detected in thymus, kidney, muscle, heart, brain or liver.

It is found in the cell membrane. In terms of biological role, may cooperate with MD-1 and TLR4 to mediate the innate immune response to bacterial lipopolysaccharide (LPS) in B-cells. Leads to NF-kappa-B activation. Also involved in the life/death decision of B-cells. This Mus musculus (Mouse) protein is CD180 antigen (Cd180).